Reading from the N-terminus, the 320-residue chain is Porphobilinogen deaminase (320 aa).

Cys-248 carries the S-(dipyrrolylmethanemethyl)cysteine modification.

This sequence belongs to the HMBS family. In terms of assembly, monomer. Requires dipyrromethane as cofactor.

The enzyme catalyses 4 porphobilinogen + H2O = hydroxymethylbilane + 4 NH4(+). The protein operates within porphyrin-containing compound metabolism; protoporphyrin-IX biosynthesis; coproporphyrinogen-III from 5-aminolevulinate: step 2/4. It functions in the pathway porphyrin-containing compound metabolism; chlorophyll biosynthesis. Tetrapolymerization of the monopyrrole PBG into the hydroxymethylbilane pre-uroporphyrinogen in several discrete steps. This chain is Porphobilinogen deaminase, found in Synechococcus elongatus (strain ATCC 33912 / PCC 7942 / FACHB-805) (Anacystis nidulans R2).